The chain runs to 544 residues: CTP synthase (544 aa).

The segment at 1 to 265 (MTKFIFVTGG…DDIICEHLDL (265 aa)) is amidoligase domain. Ser-13 serves as a coordination point for CTP. Ser-13 is a UTP binding site. ATP is bound by residues 14–19 (SLGKGI) and Asp-71. Positions 71 and 139 each coordinate Mg(2+). CTP is bound by residues 146 to 148 (DIE), 186 to 191 (KTKPTQ), and Lys-222. UTP-binding positions include 186-191 (KTKPTQ) and Lys-222. A Glutamine amidotransferase type-1 domain is found at 290–542 (NIAMVGKYVD…VEAALAYQAD (253 aa)). Gly-351 contacts L-glutamine. Cys-378 (nucleophile; for glutamine hydrolysis) is an active-site residue. L-glutamine-binding positions include 379–382 (LGMQ), Glu-402, and Arg-469. Active-site residues include His-515 and Glu-517.

This sequence belongs to the CTP synthase family. As to quaternary structure, homotetramer.

It carries out the reaction UTP + L-glutamine + ATP + H2O = CTP + L-glutamate + ADP + phosphate + 2 H(+). The enzyme catalyses L-glutamine + H2O = L-glutamate + NH4(+). It catalyses the reaction UTP + NH4(+) + ATP = CTP + ADP + phosphate + 2 H(+). The protein operates within pyrimidine metabolism; CTP biosynthesis via de novo pathway; CTP from UDP: step 2/2. Its activity is regulated as follows. Allosterically activated by GTP, when glutamine is the substrate; GTP has no effect on the reaction when ammonia is the substrate. The allosteric effector GTP functions by stabilizing the protein conformation that binds the tetrahedral intermediate(s) formed during glutamine hydrolysis. Inhibited by the product CTP, via allosteric rather than competitive inhibition. Functionally, catalyzes the ATP-dependent amination of UTP to CTP with either L-glutamine or ammonia as the source of nitrogen. Regulates intracellular CTP levels through interactions with the four ribonucleotide triphosphates. The sequence is that of CTP synthase from Laribacter hongkongensis (strain HLHK9).